A 639-amino-acid polypeptide reads, in one-letter code: Protein zwilch homolog (639 aa).

Over residues 76 to 95 (QKTSSLLNRRENKKTIKSEK) the composition is skewed to basic and acidic residues. The segment at 76–116 (QKTSSLLNRRENKKTIKSEKEDESMDMETAEGDKENTVSET) is disordered. The segment covering 96–105 (EDESMDMETA) has biased composition (acidic residues).

This sequence belongs to the ZWILCH family. As to quaternary structure, component of the RZZ complex composed of rod-1, czw-1 and zwl-1. Interacts with the spindly-like protein spdl-1. Interacts with NDC80 complex component ndc-80.

It is found in the cytoplasm. The protein localises to the cell cortex. The protein resides in the chromosome. Its subcellular location is the centromere. It localises to the kinetochore. It is found in the cytoskeleton. The protein localises to the spindle. Functionally, essential component of the mitotic checkpoint, which prevents cells from prematurely exiting mitosis. Required for chromosome segregation, the assembly of the dynein-dynactin and mdf-1-mdf-2 complexes onto kinetochores and spindle pole separation. Its function related to the spindle assembly machinery and kinetochore-microtubule attachments likely depends on its association in the mitotic RZZ complex. The RZZ complex recruits the spindly-like protein spdl-1 to kinetochores. To prevent irregular chromosome segregation, the complex also inhibits the attachment of the kinetochore-associated NDC80 complex to microtubules. The recruitment of spdl-1 to kinetochores relieves this inhibition. Required for embryonic development. This chain is Protein zwilch homolog (zwl-1), found in Caenorhabditis briggsae.